Consider the following 224-residue polypeptide: Casparian strip membrane protein 3 (224 aa).

The tract at residues 1-30 (MESKKEGVASAPTSPESRRTRSNGKGKTIA) is disordered. The Cytoplasmic segment spans residues 1-57 (MESKKEGVASAPTSPESRRTRSNGKGKTIAEATPPSVTVVSTKVTPSPRGGWRKGAA). The chain crosses the membrane as a helical span at residues 58 to 78 (ILDFILRLGAISSAIGAAAVM). Over 79–105 (GNNEQILPFFTQFFQFHVQWDDFPMFQ) the chain is Extracellular. The helical transmembrane segment at 106–126 (FFVFANGAAVVFLILSLPFSI) threads the bilayer. Topologically, residues 127 to 138 (VCIVRPFAVGPR) are cytoplasmic. The helical transmembrane segment at 139–159 (LLLVIVDIFAMALVIAAASAA) threads the bilayer. Residues 160–191 (AAVVYLAHNGSQDANWIAICQQYTDFCQVTSQ) are Extracellular-facing. Asparagine 168 is a glycosylation site (N-linked (GlcNAc...) asparagine). The chain crosses the membrane as a helical span at residues 192–212 (AVVASFVAAVFLICLIVLSSV). Topologically, residues 213–224 (ALKKGLKREFGW) are cytoplasmic.

It belongs to the Casparian strip membrane proteins (CASP) family. Homodimer and heterodimers.

The protein localises to the cell membrane. Its function is as follows. Regulates membrane-cell wall junctions and localized cell wall deposition. Required for establishment of the Casparian strip membrane domain (CSD) and the subsequent formation of Casparian strips, a cell wall modification of the root endodermis that determines an apoplastic barrier between the intraorganismal apoplasm and the extraorganismal apoplasm and prevents lateral diffusion. This is Casparian strip membrane protein 3 from Vigna unguiculata (Cowpea).